The chain runs to 421 residues: MAGDFSNRAPWKRSACDRCRAQKLRCHRDSGHSTDACLRCLKSGIECVTSKARPTGRPPSRQVQPTVVVEQGDTSSSSHTTDSSPSAGGTDMSNMMNFEYDLSLDNILDSIGMQHSDFMVNDNILVDISPLSSSQSTGQHSVTQAQVQAQTVDPSTIQSTASYQFNSLPSTSSMDSALPIRSDHVELLLSRLHSKLSAQLYSIRSSPWDIKGTLNLSLAHQGIGQDFENCESHPLVQVSQACTELERLLSGLRVPASAEHTPSSFSYTPAVPPRLRTTQLLIALSCYIQIVSIYGIIFSKVFDYLLSTSKTSNGSYQSSPLTLYIGGLPIPPNETLSGNLLVHLIEHQLHQIEQLMGLPEHYRVSSRAKDTKDGELGLFGSQHSQSLLNAAIQLGEDRDGNHDDIRCVRALKVVMRQIKDF.

Residues 16–47 (CDRCRAQKLRCHRDSGHSTDACLRCLKSGIEC) constitute a DNA-binding region (zn(2)-C6 fungal-type). The segment at 50–92 (SKARPTGRPPSRQVQPTVVVEQGDTSSSSHTTDSSPSAGGTDM) is disordered. Low complexity predominate over residues 74–86 (TSSSSHTTDSSPS).

It is found in the nucleus. Its function is as follows. Transcription factor that regulates the expression of the gene cluster that mediates the biosynthesis of fusaric acid, a mycotoxin with low to moderate toxicity to animals and humans, but with high phytotoxic properties. This Gibberella moniliformis (strain M3125 / FGSC 7600) (Maize ear and stalk rot fungus) protein is Fusaric acid cluster transcription factor FUB10.